Reading from the N-terminus, the 501-residue chain is Lysine--tRNA ligase (501 aa).

Positions 411 and 418 each coordinate Mg(2+).

Belongs to the class-II aminoacyl-tRNA synthetase family. Homodimer. Mg(2+) serves as cofactor.

The protein localises to the cytoplasm. It carries out the reaction tRNA(Lys) + L-lysine + ATP = L-lysyl-tRNA(Lys) + AMP + diphosphate. The polypeptide is Lysine--tRNA ligase (Clostridium perfringens (strain ATCC 13124 / DSM 756 / JCM 1290 / NCIMB 6125 / NCTC 8237 / Type A)).